The following is a 118-amino-acid chain: UPF0102 protein STH1475 (118 aa).

This sequence belongs to the UPF0102 family.

The sequence is that of UPF0102 protein STH1475 from Symbiobacterium thermophilum (strain DSM 24528 / JCM 14929 / IAM 14863 / T).